Here is a 1083-residue protein sequence, read N- to C-terminus: Alpha-mannosidase (1083 aa).

Ser-2 bears the N-acetylserine mark. Positions 298, 300, 411, and 626 each coordinate Zn(2+). Asp-411 acts as the Nucleophile in catalysis.

This sequence belongs to the glycosyl hydrolase 38 family. In terms of assembly, composed of isoforms with three constituent polypeptides described as [(107 kDa)-n (73 kDa)-(6-n) (31 kDa)-(6-n)], where n is 0-6. The 73 kDa and the 31 kDa polypeptides may be proteolytic derivatives of the 107 kDa polypeptide in the vacuole. Oligomerizes in the cytoplasm and retains its oligomeric form during import into the vacuole. Zn(2+) is required as a cofactor. The N-terminus is blocked.

It is found in the vacuole. It carries out the reaction Hydrolysis of terminal, non-reducing alpha-D-mannose residues in alpha-D-mannosides.. Its function is as follows. Degrades free oligosaccharides in the vacuole. The polypeptide is Alpha-mannosidase (AMS1) (Saccharomyces cerevisiae (strain ATCC 204508 / S288c) (Baker's yeast)).